The sequence spans 227 residues: Urease subunit gamma/beta (227 aa).

Residues 1-101 form a urease gamma region; the sequence is MRLTPTERDR…LAVVTDPIGG (101 aa). Residues 102-227 are urease beta; it reads GLGDQAPGAL…ACGYLGVEQR (126 aa).

It in the N-terminal section; belongs to the urease gamma subunit family. The protein in the C-terminal section; belongs to the urease beta subunit family. As to quaternary structure, heterohexamer of 3 UreC (alpha) and 3 UreAB (gamma/beta) subunits.

It localises to the cytoplasm. It catalyses the reaction urea + 2 H2O + H(+) = hydrogencarbonate + 2 NH4(+). The protein operates within nitrogen metabolism; urea degradation; CO(2) and NH(3) from urea (urease route): step 1/1. This Streptomyces avermitilis (strain ATCC 31267 / DSM 46492 / JCM 5070 / NBRC 14893 / NCIMB 12804 / NRRL 8165 / MA-4680) protein is Urease subunit gamma/beta.